A 239-amino-acid polypeptide reads, in one-letter code: 1-(5-phosphoribosyl)-5-[(5-phosphoribosylamino)methylideneamino] imidazole-4-carboxamide isomerase (239 aa).

The active-site Proton acceptor is D8. D129 (proton donor) is an active-site residue.

This sequence belongs to the HisA/HisF family.

Its subcellular location is the cytoplasm. The catalysed reaction is 1-(5-phospho-beta-D-ribosyl)-5-[(5-phospho-beta-D-ribosylamino)methylideneamino]imidazole-4-carboxamide = 5-[(5-phospho-1-deoxy-D-ribulos-1-ylimino)methylamino]-1-(5-phospho-beta-D-ribosyl)imidazole-4-carboxamide. It functions in the pathway amino-acid biosynthesis; L-histidine biosynthesis; L-histidine from 5-phospho-alpha-D-ribose 1-diphosphate: step 4/9. This chain is 1-(5-phosphoribosyl)-5-[(5-phosphoribosylamino)methylideneamino] imidazole-4-carboxamide isomerase, found in Cereibacter sphaeroides (strain ATCC 17025 / ATH 2.4.3) (Rhodobacter sphaeroides).